A 576-amino-acid chain; its full sequence is Sulfite reductase [NADPH] hemoprotein beta-component (576 aa).

The segment covering 1-12 (MDAKTQPDRSRD) has biased composition (basic and acidic residues). Residues 1 to 26 (MDAKTQPDRSRDVSQPLDKLGPDETL) form a disordered region. [4Fe-4S] cluster is bound by residues cysteine 441, cysteine 447, cysteine 486, and cysteine 490. Cysteine 490 contributes to the siroheme binding site.

Belongs to the nitrite and sulfite reductase 4Fe-4S domain family. Alpha(8)-beta(8). The alpha component is a flavoprotein, the beta component is a hemoprotein. Siroheme serves as cofactor. The cofactor is [4Fe-4S] cluster.

It carries out the reaction hydrogen sulfide + 3 NADP(+) + 3 H2O = sulfite + 3 NADPH + 4 H(+). It participates in sulfur metabolism; hydrogen sulfide biosynthesis; hydrogen sulfide from sulfite (NADPH route): step 1/1. In terms of biological role, component of the sulfite reductase complex that catalyzes the 6-electron reduction of sulfite to sulfide. This is one of several activities required for the biosynthesis of L-cysteine from sulfate. This chain is Sulfite reductase [NADPH] hemoprotein beta-component, found in Nitrobacter winogradskyi (strain ATCC 25391 / DSM 10237 / CIP 104748 / NCIMB 11846 / Nb-255).